Here is a 227-residue protein sequence, read N- to C-terminus: Small ribosomal subunit protein uS3 (227 aa).

The 69-residue stretch at 39–107 (VREFLMKKLE…PVHINIEEIR (69 aa)) folds into the KH type-2 domain.

This sequence belongs to the universal ribosomal protein uS3 family. As to quaternary structure, part of the 30S ribosomal subunit. Forms a tight complex with proteins S10 and S14.

Its function is as follows. Binds the lower part of the 30S subunit head. Binds mRNA in the 70S ribosome, positioning it for translation. The chain is Small ribosomal subunit protein uS3 from Hahella chejuensis (strain KCTC 2396).